The sequence spans 342 residues: Isopentenyl-diphosphate delta-isomerase (342 aa).

6-7 (RK) contributes to the substrate binding site. FMN is bound by residues Ser63, 64-66 (SMT), Ser94, and Asn122. Residue 94-96 (SMR) coordinates substrate. Gln157 contacts substrate. Position 158 (Glu158) interacts with Mg(2+). FMN contacts are provided by residues Lys189, Thr219, 269–271 (GLK), and 290–291 (AG).

The protein belongs to the IPP isomerase type 2 family. In terms of assembly, homooctamer. Dimer of tetramers. FMN is required as a cofactor. The cofactor is NADPH. Mg(2+) serves as cofactor.

The protein localises to the cytoplasm. The enzyme catalyses isopentenyl diphosphate = dimethylallyl diphosphate. Its function is as follows. Involved in the biosynthesis of isoprenoids. Catalyzes the 1,3-allylic rearrangement of the homoallylic substrate isopentenyl (IPP) to its allylic isomer, dimethylallyl diphosphate (DMAPP). This is Isopentenyl-diphosphate delta-isomerase from Rickettsia bellii (strain RML369-C).